The following is a 157-amino-acid chain: S-ribosylhomocysteine lyase (157 aa).

Residues His54, His58, and Cys124 each contribute to the Fe cation site.

Belongs to the LuxS family. In terms of assembly, homodimer. Requires Fe cation as cofactor.

The enzyme catalyses S-(5-deoxy-D-ribos-5-yl)-L-homocysteine = (S)-4,5-dihydroxypentane-2,3-dione + L-homocysteine. In terms of biological role, involved in the synthesis of autoinducer 2 (AI-2) which is secreted by bacteria and is used to communicate both the cell density and the metabolic potential of the environment. The regulation of gene expression in response to changes in cell density is called quorum sensing. Catalyzes the transformation of S-ribosylhomocysteine (RHC) to homocysteine (HC) and 4,5-dihydroxy-2,3-pentadione (DPD). The sequence is that of S-ribosylhomocysteine lyase from Lacticaseibacillus paracasei (strain ATCC 334 / BCRC 17002 / CCUG 31169 / CIP 107868 / KCTC 3260 / NRRL B-441) (Lactobacillus paracasei).